A 122-amino-acid polypeptide reads, in one-letter code: Alkene monooxygenase system, ferredoxin component (122 aa).

The region spanning 16–111 is the Rieske domain; that stretch reads VDVCAVDDLW…LKVEGGRVLI (96 aa). Cys55, His57, Cys75, and His78 together coordinate [2Fe-2S] cluster.

The protein belongs to the bacterial ring-hydroxylating dioxygenase ferredoxin component family. In terms of assembly, homodimer. The alkene monooxygenase multicomponent enzyme system is composed of an electron transfer component and a monooxygenase component interacting with the effector protein XamoD. The electron transfer component is composed of a ferredoxin reductase (XamoF) and a ferredoxin (XamoC), and the monooxygenase component is formed by a heterohexamer (dimer of heterotrimers) of two alpha subunits (XamoA), two beta subunits (XamoE) and two gamma subunits (XamoB). The cofactor is [2Fe-2S] cluster.

Its subcellular location is the cytoplasm. In terms of biological role, ferredoxin component of the alkene monooxygenase multicomponent enzyme system which catalyzes the O2- and NADH-dependent epoxidation of short chain (C2 to C6) alkenes to their corresponding epoxides. Functions as an intermediate electron transfer protein. The sequence is that of Alkene monooxygenase system, ferredoxin component from Xanthobacter autotrophicus (strain ATCC BAA-1158 / Py2).